The chain runs to 672 residues: APC membrane recruitment protein 2 (672 aa).

Residues 1–21 show a composition bias toward gly residues; it reads METGRSRGGGAAVSERGGGAR. Disordered regions lie at residues 1–23, 74–360, and 443–560; these read METG…ARAG, TMPS…DPSA, and MLSQ…DALC. A compositionally biased stretch (low complexity) spans 142-158; that stretch reads GSLASSSVAKSHSFFSL. Ser-154 is modified (phosphoserine). Basic and acidic residues-rich tracts occupy residues 163–175 and 201–210; these read GRSE…HAEA and RGKEEEEKAV. 3 positions are modified to phosphoserine: Ser-223, Ser-227, and Ser-244. Residues 230–254 show a composition bias toward basic and acidic residues; the sequence is CVKEEPPRAARRPDSPGQDASRHAA. Residues 255–269 show a composition bias toward low complexity; it reads GEPAGGEQAPASAES. The residue at position 284 (Ser-284) is a Phosphoserine. A compositionally biased stretch (basic and acidic residues) spans 289 to 303; it reads SRGEDAEGHRREEKP. Residues 343–354 are compositionally biased toward low complexity; it reads ASAVPDPSSVDP. A phosphoserine mark is found at Ser-356 and Ser-359. Residues 446 to 457 show a composition bias toward low complexity; sequence QTEDQGQGTQEG. 2 stretches are compositionally biased toward basic and acidic residues: residues 478–488 and 502–516; these read RCGEAAKDMSS and QQKE…EHQE.

The protein belongs to the Amer family. Interacts with APC.

It localises to the cell membrane. Functionally, negative regulator of the canonical Wnt signaling pathway involved in neuroectodermal patterning. Acts by specifically binding phosphatidylinositol 4,5-bisphosphate (PtdIns(4,5)P2), translocating to the cell membrane and interacting with key regulators of the canonical Wnt signaling pathway, such as components of the beta-catenin destruction complex. This Mus musculus (Mouse) protein is APC membrane recruitment protein 2 (Amer2).